Reading from the N-terminus, the 345-residue chain is S-adenosylmethionine:tRNA ribosyltransferase-isomerase (345 aa).

It belongs to the QueA family. Monomer.

It is found in the cytoplasm. The enzyme catalyses 7-aminomethyl-7-carbaguanosine(34) in tRNA + S-adenosyl-L-methionine = epoxyqueuosine(34) in tRNA + adenine + L-methionine + 2 H(+). Its pathway is tRNA modification; tRNA-queuosine biosynthesis. In terms of biological role, transfers and isomerizes the ribose moiety from AdoMet to the 7-aminomethyl group of 7-deazaguanine (preQ1-tRNA) to give epoxyqueuosine (oQ-tRNA). The chain is S-adenosylmethionine:tRNA ribosyltransferase-isomerase from Shewanella amazonensis (strain ATCC BAA-1098 / SB2B).